The chain runs to 207 residues: Guanylate kinase (207 aa).

One can recognise a Guanylate kinase-like domain in the interval 5–184 (GNLFIVSAPS…ALADLKSIIF (180 aa)). 12–19 (APSGAGKS) serves as a coordination point for ATP.

This sequence belongs to the guanylate kinase family.

The protein localises to the cytoplasm. The enzyme catalyses GMP + ATP = GDP + ADP. Essential for recycling GMP and indirectly, cGMP. The chain is Guanylate kinase from Shewanella denitrificans (strain OS217 / ATCC BAA-1090 / DSM 15013).